The sequence spans 385 residues: ATP phosphoribosyltransferase regulatory subunit (385 aa).

Belongs to the class-II aminoacyl-tRNA synthetase family. HisZ subfamily. In terms of assembly, heteromultimer composed of HisG and HisZ subunits.

Its subcellular location is the cytoplasm. Its pathway is amino-acid biosynthesis; L-histidine biosynthesis; L-histidine from 5-phospho-alpha-D-ribose 1-diphosphate: step 1/9. In terms of biological role, required for the first step of histidine biosynthesis. May allow the feedback regulation of ATP phosphoribosyltransferase activity by histidine. The sequence is that of ATP phosphoribosyltransferase regulatory subunit from Lysinibacillus sphaericus (strain C3-41).